The following is a 324-amino-acid chain: Cysteine-rich repeat secretory protein 9 (324 aa).

The signal sequence occupies residues 1-27 (MARIIITLTIPLFYFFFFSLLSHQTMS). Gnk2-homologous domains are found at residues 29–132 (PDHI…NVSF) and 138–248 (IVPS…TSVL). A disordered region spans residues 251–286 (PPPSPSAPPPRSPPPKSSPPSSLPQTPSPPLVFTPP).

Belongs to the cysteine-rich repeat secretory protein family.

The protein localises to the secreted. The polypeptide is Cysteine-rich repeat secretory protein 9 (CRRSP9) (Arabidopsis thaliana (Mouse-ear cress)).